A 293-amino-acid chain; its full sequence is Cytosolic Fe-S cluster assembly factor CFD1 (293 aa).

25–32 (GKGGVGKS) provides a ligand contact to ATP. [4Fe-4S] cluster contacts are provided by Cys-201 and Cys-204. Residue Ser-291 is modified to Phosphoserine.

It belongs to the Mrp/NBP35 ATP-binding proteins family. NUBP2/CFD1 subfamily. Heterotetramer of 2 NBP35 and 2 CFD1 chains. The cofactor is [4Fe-4S] cluster.

It localises to the cytoplasm. Component of the cytosolic iron-sulfur (Fe/S) protein assembly (CIA) machinery. Required for maturation of extramitochondrial Fe-S proteins. The NBP35-CFD1 heterotetramer forms a Fe-S scaffold complex, mediating the de novo assembly of an Fe-S cluster and its transfer to target apoproteins. Nucleotide binding/hydrolysis seems to be critcal for loading of Fe-S clusters onto CFD1 and NBP35. Required for biogenesis and export of both ribosomal subunits, which may reflect a role in assembly of the Fe/S clusters in RLI1, a protein which performs rRNA processing and ribosome export. This Saccharomyces cerevisiae (strain ATCC 204508 / S288c) (Baker's yeast) protein is Cytosolic Fe-S cluster assembly factor CFD1.